Here is a 367-residue protein sequence, read N- to C-terminus: bZIP transcription factor 18 (367 aa).

Residues 1–57 form a disordered region; the sequence is MEDPSNPQPNQSNLSQCPPLATAPTPAPVRGPYHRRAHSEVQFRLPEDLDLSEPFGG. Basic and acidic residues predominate over residues 38-47; sequence HSEVQFRLPE. A Phosphoserine modification is found at Ser70. The segment at 79–124 is disordered; that stretch reads SGSGSASDSAGPSAPRSDNPFSAENGGAEAGNSRPRHRHSLSVDGS. Low complexity predominate over residues 82-96; sequence GSASDSAGPSAPRSD. Residues 148 to 211 enclose the bZIP domain; that stretch reads DPKRAKRIIA…TGLSSENTEL (64 aa). Residues 150 to 171 are basic motif; the sequence is KRAKRIIANRQSAARSKERKAR. A coiled-coil region spans residues 166 to 245; sequence KERKARYILE…VERLKFATGE (80 aa). The interval 176–190 is leucine-zipper; it reads LERKVQTLQTEATTL. Composition is skewed to polar residues over residues 294–309, 317–328, and 354–367; these read QPNN…NPPT, ATSNAPAQSHSY, and FGRS…SSTM. Disordered stretches follow at residues 294 to 330 and 343 to 367; these read QPNN…SYSE and LDIS…SSTM.

As to quaternary structure, interacts with NEAP1. Forms homodimer and heterodimer with bZIP34 and bZIP61. As to expression, ubiquitous. Strongly expressed in mature pollen.

The protein resides in the nucleus. It localises to the nucleoplasm. Its subcellular location is the cytoplasm. It is found in the perinuclear region. Its function is as follows. Transcription factor that may participate with bZIP34 in the gametophytic control of pollen development. This is bZIP transcription factor 18 from Arabidopsis thaliana (Mouse-ear cress).